The primary structure comprises 145 residues: 3-hydroxyacyl-[acyl-carrier-protein] dehydratase FabZ (145 aa).

The active site involves histidine 47.

It belongs to the thioester dehydratase family. FabZ subfamily.

It is found in the cytoplasm. It catalyses the reaction a (3R)-hydroxyacyl-[ACP] = a (2E)-enoyl-[ACP] + H2O. Its function is as follows. Involved in unsaturated fatty acids biosynthesis. Catalyzes the dehydration of short chain beta-hydroxyacyl-ACPs and long chain saturated and unsaturated beta-hydroxyacyl-ACPs. In Chromohalobacter salexigens (strain ATCC BAA-138 / DSM 3043 / CIP 106854 / NCIMB 13768 / 1H11), this protein is 3-hydroxyacyl-[acyl-carrier-protein] dehydratase FabZ.